The primary structure comprises 274 residues: NH(3)-dependent NAD(+) synthetase (274 aa).

ATP is bound at residue 46–53; that stretch reads GISGGQDS. Asp52 is a Mg(2+) binding site. Arg140 is a deamido-NAD(+) binding site. Thr160 lines the ATP pocket. A Mg(2+)-binding site is contributed by Glu165. The deamido-NAD(+) site is built by Lys173 and Asp180. Residues Lys189 and Thr211 each contribute to the ATP site. 260–261 contacts deamido-NAD(+); the sequence is HK.

The protein belongs to the NAD synthetase family. Homodimer.

The enzyme catalyses deamido-NAD(+) + NH4(+) + ATP = AMP + diphosphate + NAD(+) + H(+). It functions in the pathway cofactor biosynthesis; NAD(+) biosynthesis; NAD(+) from deamido-NAD(+) (ammonia route): step 1/1. Functionally, catalyzes the ATP-dependent amidation of deamido-NAD to form NAD. Uses ammonia as a nitrogen source. The polypeptide is NH(3)-dependent NAD(+) synthetase (Lactococcus lactis subsp. lactis (strain IL1403) (Streptococcus lactis)).